Consider the following 95-residue polypeptide: Aspartyl/glutamyl-tRNA(Asn/Gln) amidotransferase subunit C (95 aa).

This sequence belongs to the GatC family. Heterotrimer of A, B and C subunits.

It catalyses the reaction L-glutamyl-tRNA(Gln) + L-glutamine + ATP + H2O = L-glutaminyl-tRNA(Gln) + L-glutamate + ADP + phosphate + H(+). The catalysed reaction is L-aspartyl-tRNA(Asn) + L-glutamine + ATP + H2O = L-asparaginyl-tRNA(Asn) + L-glutamate + ADP + phosphate + 2 H(+). Its function is as follows. Allows the formation of correctly charged Asn-tRNA(Asn) or Gln-tRNA(Gln) through the transamidation of misacylated Asp-tRNA(Asn) or Glu-tRNA(Gln) in organisms which lack either or both of asparaginyl-tRNA or glutaminyl-tRNA synthetases. The reaction takes place in the presence of glutamine and ATP through an activated phospho-Asp-tRNA(Asn) or phospho-Glu-tRNA(Gln). This is Aspartyl/glutamyl-tRNA(Asn/Gln) amidotransferase subunit C from Bradyrhizobium diazoefficiens (strain JCM 10833 / BCRC 13528 / IAM 13628 / NBRC 14792 / USDA 110).